The chain runs to 417 residues: mRNA export factor ICP27 homolog (417 aa).

Acidic residues predominate over residues 1 to 28 (MEDIIEGGISSDDDFDSSDSSSDEEESD). Positions 1 to 143 (MEDIIEGGIS…NGPLRNGPPR (143 aa)) are disordered. The interval 64–120 (RQRSPITWEHQSPLSRVYRSPSPMRFGKRPRISSNSTSRSCKTSWADRVREAAAQRR) is interaction with RNA. The Nuclear localization signal motif lies at 88–94 (RFGKRPR). The segment covering 96-107 (SSNSTSRSCKTS) has biased composition (low complexity). Residues 106 to 120 (TSWADRVREAAAQRR) are interaction with host ALYREF or mouse ALYREF2. Residues 108-117 (WADRVREAAA) show a composition bias toward basic and acidic residues. The Nuclear localization signal motif lies at 118–127 (QRRPSRPFRK). Positions 120 to 130 (RPSRPFRKPYS) are enriched in basic residues. The span at 132-141 (PRNGPLRNGP) shows a compositional bias: low complexity. Residues Cys295, His385, Cys389, and Cys394 each contribute to the Zn(2+) site. The CHC2-type zinc finger occupies 295-394 (CLMQTTPQDH…HLNKCPSSTC (100 aa)).

It belongs to the HHV-1 ICP27 protein family. Homodimer. Homodimerization is required for transactivation. Interacts with host ALYREF and with mouse ALYREF2. Associates in a complex with RNA, and host export factors NXF1/TAP and ALYREF or ALYREF2; these interactions allow nuclear export of viral transcripts.

It localises to the host cytoplasm. It is found in the host nucleus. Its function is as follows. Probably acts as a viral splicing factor that regulates viral RNA splicing. Functions as a multifunctional regulator of the expression of viral lytic genes. Early protein that promotes the accumulation and nuclear export of viral intronless RNA transcripts by interacting with mRNAs and cellular export proteins. The protein is mRNA export factor ICP27 homolog (EJRF1) of Saimiriine herpesvirus 2 (strain 11) (SaHV-2).